Consider the following 94-residue polypeptide: Co-chaperonin GroES (94 aa).

It belongs to the GroES chaperonin family. In terms of assembly, heptamer of 7 subunits arranged in a ring. Interacts with the chaperonin GroEL.

Its subcellular location is the cytoplasm. In terms of biological role, together with the chaperonin GroEL, plays an essential role in assisting protein folding. The GroEL-GroES system forms a nano-cage that allows encapsulation of the non-native substrate proteins and provides a physical environment optimized to promote and accelerate protein folding. GroES binds to the apical surface of the GroEL ring, thereby capping the opening of the GroEL channel. This chain is Co-chaperonin GroES, found in Clostridium novyi (strain NT).